We begin with the raw amino-acid sequence, 113 residues long: Ribulose bisphosphate carboxylase small subunit (113 aa).

Belongs to the RuBisCO small chain family. In terms of assembly, heterohexadecamer of 8 large and 8 small subunits. Forms a CsoS2-CsoS1-RuBisCO complex.

The protein resides in the carboxysome. Functionally, ruBisCO catalyzes two reactions: the carboxylation of D-ribulose 1,5-bisphosphate, the primary event in carbon dioxide fixation, as well as the oxidative fragmentation of the pentose substrate in the photorespiration process. Both reactions occur simultaneously and in competition at the same active site. Although the small subunit is not catalytic it is essential for maximal activity. There are estimated to be 152 RuBisCO holoenzymes per carboxysome. In Prochlorococcus marinus subsp. pastoris (strain CCMP1986 / NIES-2087 / MED4), this protein is Ribulose bisphosphate carboxylase small subunit.